The chain runs to 103 residues: Nucleoid-associated protein SUN_2278 (103 aa).

It belongs to the YbaB/EbfC family. Homodimer.

The protein localises to the cytoplasm. The protein resides in the nucleoid. Its function is as follows. Binds to DNA and alters its conformation. May be involved in regulation of gene expression, nucleoid organization and DNA protection. This is Nucleoid-associated protein SUN_2278 from Sulfurovum sp. (strain NBC37-1).